Consider the following 685-residue polypeptide: Polyphosphate kinase (685 aa).

Residue Asn45 participates in ATP binding. Positions 375 and 405 each coordinate Mg(2+). His435 serves as the catalytic Phosphohistidine intermediate. ATP is bound by residues Tyr468, Arg564, and His592.

The protein belongs to the polyphosphate kinase 1 (PPK1) family. Mg(2+) serves as cofactor. Post-translationally, an intermediate of this reaction is the autophosphorylated ppk in which a phosphate is covalently linked to a histidine residue through a N-P bond.

It catalyses the reaction [phosphate](n) + ATP = [phosphate](n+1) + ADP. Catalyzes the reversible transfer of the terminal phosphate of ATP to form a long-chain polyphosphate (polyP). The polypeptide is Polyphosphate kinase (Neisseria meningitidis serogroup C (strain 053442)).